Reading from the N-terminus, the 490-residue chain is Ribulose bisphosphate carboxylase large chain (490 aa).

Substrate contacts are provided by Asn127 and Thr177. Lys179 (proton acceptor) is an active-site residue. Residue Lys181 participates in substrate binding. Mg(2+)-binding residues include Lys205, Asp207, and Glu208. Lys205 carries the post-translational modification N6-carboxylysine. Catalysis depends on His297, which acts as the Proton acceptor. Substrate is bound by residues Arg298, His330, and Ser382.

This sequence belongs to the RuBisCO large chain family. Type I subfamily. As to quaternary structure, heterohexadecamer of 8 large chains and 8 small chains. The cofactor is Mg(2+).

It localises to the plastid. It is found in the chloroplast. The catalysed reaction is 2 (2R)-3-phosphoglycerate + 2 H(+) = D-ribulose 1,5-bisphosphate + CO2 + H2O. The enzyme catalyses D-ribulose 1,5-bisphosphate + O2 = 2-phosphoglycolate + (2R)-3-phosphoglycerate + 2 H(+). RuBisCO catalyzes two reactions: the carboxylation of D-ribulose 1,5-bisphosphate, the primary event in carbon dioxide fixation, as well as the oxidative fragmentation of the pentose substrate in the photorespiration process. Both reactions occur simultaneously and in competition at the same active site. The protein is Ribulose bisphosphate carboxylase large chain of Trieres chinensis (Marine centric diatom).